A 469-amino-acid polypeptide reads, in one-letter code: 3-isopropylmalate dehydratase large subunit (469 aa).

3 residues coordinate [4Fe-4S] cluster: Cys349, Cys409, and Cys412. Residues 424 to 443 (QISASSSNRNFKGRQGSPSG) form a disordered region.

This sequence belongs to the aconitase/IPM isomerase family. LeuC type 1 subfamily. In terms of assembly, heterodimer of LeuC and LeuD. [4Fe-4S] cluster serves as cofactor.

The enzyme catalyses (2R,3S)-3-isopropylmalate = (2S)-2-isopropylmalate. The protein operates within amino-acid biosynthesis; L-leucine biosynthesis; L-leucine from 3-methyl-2-oxobutanoate: step 2/4. Its function is as follows. Catalyzes the isomerization between 2-isopropylmalate and 3-isopropylmalate, via the formation of 2-isopropylmaleate. The sequence is that of 3-isopropylmalate dehydratase large subunit from Thermosynechococcus vestitus (strain NIES-2133 / IAM M-273 / BP-1).